Here is a 571-residue protein sequence, read N- to C-terminus: Polypeptide N-acetylgalactosaminyltransferase 2 (571 aa).

The Cytoplasmic portion of the chain corresponds to 1–6 (MRRRSR). The helical; Signal-anchor for type II membrane protein transmembrane segment at 7–24 (MLLCFAFLWVLGIAYYMY) threads the bilayer. Residues 25 to 571 (SGGGSALAGG…QWKFTLNLQQ (547 aa)) are Lumenal-facing. An O-linked (Xyl...) (chondroitin sulfate) serine glycan is attached at S29. Over residues 53 to 66 (KKDLHHSNGEEKAQ) the composition is skewed to basic and acidic residues. Residues 53-74 (KKDLHHSNGEEKAQSMETLPPG) form a disordered region. Intrachain disulfides connect C126-C354, C345-C423, C456-C473, and C496-C513. The segment at 135–240 (LPATSVVITF…EHWLEPLLER (106 aa)) is catalytic subdomain A. 3 residues coordinate substrate: T143, D176, and R201. Mn(2+) is bound at residue D224. Residue S225 coordinates substrate. Residue H226 participates in Mn(2+) binding. A catalytic subdomain B region spans residues 300–362 (PIKTPMIAGG…PCSRVGHVFR (63 aa)). W331 serves as a coordination point for substrate. Mn(2+) is bound at residue H359. Substrate-binding residues include R362, H365, and Y367. The Ricin B-type lectin domain occupies 443 to 566 (QDIAFGALQQ…PALSQQWKFT (124 aa)). S536 is subject to Phosphoserine. C539 and C555 are joined by a disulfide.

This sequence belongs to the glycosyltransferase 2 family. GalNAc-T subfamily. It depends on Mn(2+) as a cofactor. As to expression, detected in urine (at protein level). Widely expressed.

The protein localises to the golgi apparatus. The protein resides in the golgi stack membrane. Its subcellular location is the secreted. The enzyme catalyses L-seryl-[protein] + UDP-N-acetyl-alpha-D-galactosamine = a 3-O-[N-acetyl-alpha-D-galactosaminyl]-L-seryl-[protein] + UDP + H(+). It carries out the reaction L-threonyl-[protein] + UDP-N-acetyl-alpha-D-galactosamine = a 3-O-[N-acetyl-alpha-D-galactosaminyl]-L-threonyl-[protein] + UDP + H(+). It functions in the pathway protein modification; protein glycosylation. Functionally, catalyzes the initial reaction in O-linked oligosaccharide biosynthesis, the transfer of an N-acetyl-D-galactosamine residue to a serine or threonine residue on the protein receptor. Has a broad spectrum of substrates for peptides such as EA2, Muc5AC, Muc1a, Muc1b. Probably involved in O-linked glycosylation of the immunoglobulin A1 (IgA1) hinge region. Involved in O-linked glycosylation of APOC-III, ANGPTL3 and PLTP. It participates in the regulation of HDL-C metabolism. The chain is Polypeptide N-acetylgalactosaminyltransferase 2 (GALNT2) from Homo sapiens (Human).